The chain runs to 503 residues: GTPase Obg (503 aa).

Positions 2 to 159 (PQFVDRVVLH…KDVILELKSM (158 aa)) constitute an Obg domain. The region spanning 160 to 340 (ADVGLVGFPS…LKYALMDIVK (181 aa)) is the OBG-type G domain. GTP is bound by residues 166-173 (GFPSAGKS), 191-195 (FTTLV), 212-215 (DVPG), 292-295 (NKMD), and 321-323 (STV). Ser-173 and Thr-193 together coordinate Mg(2+). In terms of domain architecture, OCT spans 371-444 (EFEVEADPSA…IGEITFEWDP (74 aa)). The span at 457-476 (RGTDVRLEQNTRATPEERKR) shows a compositional bias: basic and acidic residues. Residues 457–503 (RGTDVRLEQNTRATPEERKRASQARRGLIDENDFGDGEVAERERWQG) are disordered.

Belongs to the TRAFAC class OBG-HflX-like GTPase superfamily. OBG GTPase family. Monomer. Mg(2+) serves as cofactor.

It is found in the cytoplasm. Its function is as follows. An essential GTPase which binds GTP, GDP and possibly (p)ppGpp with moderate affinity, with high nucleotide exchange rates and a fairly low GTP hydrolysis rate. Plays a role in control of the cell cycle, stress response, ribosome biogenesis and in those bacteria that undergo differentiation, in morphogenesis control. This chain is GTPase Obg, found in Corynebacterium jeikeium (strain K411).